Reading from the N-terminus, the 116-residue chain is Large ribosomal subunit protein bL20 (116 aa).

This sequence belongs to the bacterial ribosomal protein bL20 family.

In terms of biological role, binds directly to 23S ribosomal RNA and is necessary for the in vitro assembly process of the 50S ribosomal subunit. It is not involved in the protein synthesizing functions of that subunit. The polypeptide is Large ribosomal subunit protein bL20 (rplT) (Helicobacter pylori (strain ATCC 700392 / 26695) (Campylobacter pylori)).